A 222-amino-acid chain; its full sequence is UPF0758 protein Mpe_A2695 (222 aa).

The MPN domain occupies 100-222 (VFDSPQAVKD…VVSFAERGLL (123 aa)). His171, His173, and Asp184 together coordinate Zn(2+). The JAMM motif signature appears at 171 to 184 (HNHPSGVAEPSRAD).

This sequence belongs to the UPF0758 family.

The polypeptide is UPF0758 protein Mpe_A2695 (Methylibium petroleiphilum (strain ATCC BAA-1232 / LMG 22953 / PM1)).